We begin with the raw amino-acid sequence, 716 residues long: Fatty acid oxidation complex subunit alpha (716 aa).

The segment at 1–189 is enoyl-CoA hydratase/isomerase; it reads MIYQSPTIQV…KVGAVDAVVA (189 aa). Aspartate 296 contacts substrate. The tract at residues 311-716 is 3-hydroxyacyl-CoA dehydrogenase; the sequence is KDVKSAAVLG…AANNGSYYQA (406 aa). Residues methionine 324, aspartate 343, 400 to 402, lysine 407, and serine 429 each bind NAD(+); that span reads VVE. Residue histidine 450 is the For 3-hydroxyacyl-CoA dehydrogenase activity of the active site. Asparagine 453 lines the NAD(+) pocket. Residues asparagine 500 and tyrosine 660 each coordinate substrate.

The protein in the N-terminal section; belongs to the enoyl-CoA hydratase/isomerase family. This sequence in the C-terminal section; belongs to the 3-hydroxyacyl-CoA dehydrogenase family. In terms of assembly, heterotetramer of two alpha chains (FadB) and two beta chains (FadA).

The enzyme catalyses a (3S)-3-hydroxyacyl-CoA + NAD(+) = a 3-oxoacyl-CoA + NADH + H(+). The catalysed reaction is a (3S)-3-hydroxyacyl-CoA = a (2E)-enoyl-CoA + H2O. It carries out the reaction a 4-saturated-(3S)-3-hydroxyacyl-CoA = a (3E)-enoyl-CoA + H2O. It catalyses the reaction (3S)-3-hydroxybutanoyl-CoA = (3R)-3-hydroxybutanoyl-CoA. The enzyme catalyses a (3Z)-enoyl-CoA = a 4-saturated (2E)-enoyl-CoA. The catalysed reaction is a (3E)-enoyl-CoA = a 4-saturated (2E)-enoyl-CoA. It functions in the pathway lipid metabolism; fatty acid beta-oxidation. Its function is as follows. Involved in the aerobic and anaerobic degradation of long-chain fatty acids via beta-oxidation cycle. Catalyzes the formation of 3-oxoacyl-CoA from enoyl-CoA via L-3-hydroxyacyl-CoA. It can also use D-3-hydroxyacyl-CoA and cis-3-enoyl-CoA as substrate. The sequence is that of Fatty acid oxidation complex subunit alpha from Shewanella sp. (strain MR-7).